The chain runs to 185 residues: Elongation factor P (185 aa).

It belongs to the elongation factor P family.

It is found in the cytoplasm. Its pathway is protein biosynthesis; polypeptide chain elongation. Its function is as follows. Involved in peptide bond synthesis. Stimulates efficient translation and peptide-bond synthesis on native or reconstituted 70S ribosomes in vitro. Probably functions indirectly by altering the affinity of the ribosome for aminoacyl-tRNA, thus increasing their reactivity as acceptors for peptidyl transferase. This is Elongation factor P from Trichodesmium erythraeum (strain IMS101).